Here is a 441-residue protein sequence, read N- to C-terminus: Transcription factor bHLH90 (441 aa).

Positions 260-309 (NFKSKNLHSERKRRERINQAMYGLRAVVPKITKLNKIGIFSDAVDYINEL) constitute a bHLH domain.

As to quaternary structure, homodimer. As to expression, expressed constitutively in roots, leaves, stems, and flowers.

It localises to the nucleus. The protein is Transcription factor bHLH90 (BHLH90) of Arabidopsis thaliana (Mouse-ear cress).